Reading from the N-terminus, the 113-residue chain is Hydrogenase maturation factor HypA (113 aa).

His-2 serves as a coordination point for Ni(2+). Positions 73, 76, 89, and 92 each coordinate Zn(2+).

This sequence belongs to the HypA/HybF family.

Its function is as follows. Involved in the maturation of [NiFe] hydrogenases. Required for nickel insertion into the metal center of the hydrogenase. The protein is Hydrogenase maturation factor HypA of Dechloromonas aromatica (strain RCB).